Here is a 450-residue protein sequence, read N- to C-terminus: F-box protein KIB3 (450 aa).

Positions 20-50 (DLVRLILERLSFVDFHRARCVSSTWYVASKS) constitute an F-box domain.

It is found in the cytoplasm. Its subcellular location is the nucleus. The protein resides in the nucleolus. In terms of biological role, component of SCF(ASK-cullin-F-box) E3 ubiquitin ligase complexes, which may mediate the ubiquitination and subsequent proteasomal degradation of target proteins. Required for brassinosteroid (BR) signal transduction. Mediates ASK7/BIN2/SK21 inactivation both by competing with substrate binding (e.g. BZR1) and by promoting its ubiquitination and subsequent proteasomal degradation. This is F-box protein KIB3 from Arabidopsis thaliana (Mouse-ear cress).